Consider the following 352-residue polypeptide: 4-hydroxybenzaldehyde synthase, chloroplastic (352 aa).

Residue N122 is glycosylated (N-linked (GlcNAc...) asparagine). 2 disulfide bridges follow: C159/C199 and C190/C231. An N-linked (GlcNAc...) asparagine glycan is attached at N247. A disulfide bond links C289 and C339. Active-site residues include H298 and N318.

This sequence belongs to the peptidase C1 family. Forms homodimers, homotrimers and homotetramers. Mainly expressed in pods, but also present in stems, roots, leaves and embryos (at protein level).

The protein localises to the plastid. Its subcellular location is the chloroplast. It carries out the reaction (E)-4-coumarate + H2O = 4-hydroxybenzaldehyde + acetate. The protein operates within aromatic compound metabolism; phenylpropanoid biosynthesis. With respect to regulation, inhibited by ascorbate. Involved in the biosynthesis of vanillin (4-hydroxy-3-methoxy-benzaldehyde) and derivative natural products, key components of vanilla pods flavor. Catalyzes the conversion of (E)-4-coumarate to 4-hydroxybenzaldehyde, a vanillin precursor. Mediates the conversion of ferulic acid to 3-methoxy-4-hydroxybenzaldehyde with a very low efficiency. Cannot use cinnamic, caffeic, sinapic and o-coumaric acids as substrates. The sequence is that of 4-hydroxybenzaldehyde synthase, chloroplastic from Vanilla planifolia (Vanilla).